A 106-amino-acid chain; its full sequence is uncharacterized protein (106 aa).

Transmembrane regions (helical) follow at residues 5-27, 42-64, and 76-98; these read IFVI…GIII, AVAA…LAYM, and LPYI…TNFF.

The protein localises to the cell membrane. This is an uncharacterized protein from Archaeoglobus fulgidus (strain ATCC 49558 / DSM 4304 / JCM 9628 / NBRC 100126 / VC-16).